We begin with the raw amino-acid sequence, 160 residues long: Ribosomal RNA large subunit methyltransferase H (160 aa).

S-adenosyl-L-methionine-binding positions include L77, G109, and 128 to 133 (LSNLTF).

It belongs to the RNA methyltransferase RlmH family. Homodimer.

The protein resides in the cytoplasm. The enzyme catalyses pseudouridine(1915) in 23S rRNA + S-adenosyl-L-methionine = N(3)-methylpseudouridine(1915) in 23S rRNA + S-adenosyl-L-homocysteine + H(+). In terms of biological role, specifically methylates the pseudouridine at position 1915 (m3Psi1915) in 23S rRNA. The sequence is that of Ribosomal RNA large subunit methyltransferase H from Desulforamulus reducens (strain ATCC BAA-1160 / DSM 100696 / MI-1) (Desulfotomaculum reducens).